The chain runs to 497 residues: Cytochrome P450 98A8 (497 aa).

Residues 2–19 (IIYLISLLPIIVATLMLY) traverse the membrane as a helical segment. Cys-431 provides a ligand contact to heme.

The protein belongs to the cytochrome P450 family. The cofactor is heme. Strongly expressed in inflorescence tips, young flower buds, seeds, stamen, tapetum and pollen.

It is found in the membrane. Functionally, acts redundantly with CYP98A9 as tricoumaroylspermidine meta-hydroxylase. Also catalyzes the meta-hydroxylation of the three triferuloylspermidine phenolic rings. Unable to use 5-O-(4-coumaroyl) D-quinate or 5-O-(4-coumaroyl) shikimate as substrates. This chain is Cytochrome P450 98A8 (CYP98A8), found in Arabidopsis thaliana (Mouse-ear cress).